The primary structure comprises 365 residues: DNA replication and repair protein RecF (365 aa).

Residue 30 to 37 (GDNGEGKT) participates in ATP binding.

The protein belongs to the RecF family.

The protein localises to the cytoplasm. In terms of biological role, the RecF protein is involved in DNA metabolism; it is required for DNA replication and normal SOS inducibility. RecF binds preferentially to single-stranded, linear DNA. It also seems to bind ATP. This Leptospira borgpetersenii serovar Hardjo-bovis (strain JB197) protein is DNA replication and repair protein RecF.